A 201-amino-acid polypeptide reads, in one-letter code: 3-isopropylmalate dehydratase small subunit (201 aa).

Belongs to the LeuD family. LeuD type 1 subfamily. As to quaternary structure, heterodimer of LeuC and LeuD.

The enzyme catalyses (2R,3S)-3-isopropylmalate = (2S)-2-isopropylmalate. It functions in the pathway amino-acid biosynthesis; L-leucine biosynthesis; L-leucine from 3-methyl-2-oxobutanoate: step 2/4. Its function is as follows. Catalyzes the isomerization between 2-isopropylmalate and 3-isopropylmalate, via the formation of 2-isopropylmaleate. The protein is 3-isopropylmalate dehydratase small subunit of Shewanella baltica (strain OS155 / ATCC BAA-1091).